A 206-amino-acid chain; its full sequence is Cell division protein SepF (206 aa).

Positions 31–53 (EEKERRKTERQEQRQAVKQEKRT) are enriched in basic and acidic residues. The interval 31–81 (EEKERRKTERQEQRQAVKQEKRTFPSQRPAFSEEAPTSSSSKLSAASGSSD) is disordered. The segment covering 60–80 (AFSEEAPTSSSSKLSAASGSS) has biased composition (low complexity).

This sequence belongs to the SepF family. In terms of assembly, homodimer. Interacts with FtsZ.

The protein localises to the cytoplasm. In terms of biological role, cell division protein that is part of the divisome complex and is recruited early to the Z-ring. Probably stimulates Z-ring formation, perhaps through the cross-linking of FtsZ protofilaments. Its function overlaps with FtsA. The sequence is that of Cell division protein SepF from Lachnoclostridium phytofermentans (strain ATCC 700394 / DSM 18823 / ISDg) (Clostridium phytofermentans).